The primary structure comprises 1271 residues: SR-related and CTD-associated factor 8 (1271 aa).

In terms of domain architecture, CID spans 1 to 139; that stretch reads MEAVKTFNSE…PLLDMAAGIP (139 aa). Thr-6 is modified (phosphothreonine). Lys-18 is covalently cross-linked (Glycyl lysine isopeptide (Lys-Gly) (interchain with G-Cter in SUMO1)). Positions 270–283 are enriched in basic and acidic residues; that stretch reads GEDSEHSEEPKKEI. 3 disordered regions span residues 270–289, 322–354, and 384–468; these read GEDS…SQLS, QQQP…SQQH, and EEVF…PPIR. Phosphoserine is present on Ser-273. The segment covering 327–354 has biased composition (polar residues); it reads KATPQDSQEGTFGSEHSASPSQGSSQQH. Residues 394-443 show a composition bias toward basic residues; that stretch reads VAVRSRSRTHSRSRSRSPRKRRSRSRSGSRKRKHRKRSRSRSRERKRKSS. The segment covering 447 to 461 has biased composition (basic and acidic residues); the sequence is SSERRAREREKERQK. The region spanning 477 to 551 is the RRM domain; the sequence is TTLWVGQVDK…KVIKIAWALN (75 aa). The residue at position 615 (Thr-615) is a Phosphothreonine. Phosphoserine is present on residues Ser-617 and Ser-779. The segment at 899–918 is disordered; that stretch reads TQPPAGPQNLPPLSIPNQRM. Residues 902-912 are compositionally biased toward pro residues; it reads PAGPQNLPPLS. 3 positions are modified to asymmetric dimethylarginine: Arg-917, Arg-927, and Arg-938. Composition is skewed to pro residues over residues 945-956 and 963-972; these read GIPPQRGIPPPS and HPPPRGPFPP. The interval 945–1064 is disordered; sequence GIPPQRGIPP…DGRDHFGRPP (120 aa). Basic and acidic residues-rich tracts occupy residues 1011–1027 and 1034–1064; these read EGDR…RESI and DVRD…GRPP. Asymmetric dimethylarginine is present on Arg-1073. A disordered region spans residues 1198–1271; sequence YFEGATSQRK…VVESTETEGT (74 aa). Residues 1255–1271 show a composition bias toward acidic residues; it reads ADIESEPVVESTETEGT.

In terms of assembly, interacts with POLR2A; via C-terminal heptapeptide repeat domain (CTD) phosphorylated at 'Ser-2' and 'Ser-5'. Identified in a complex with CDC5L and other spliceosomal proteins.

It is found in the nucleus. The protein resides in the nucleus matrix. Its function is as follows. Anti-terminator protein required to prevent early mRNA termination during transcription. Together with SCAF4, acts by suppressing the use of early, alternative poly(A) sites, thereby preventing the accumulation of non-functional truncated proteins. Mechanistically, associates with the phosphorylated C-terminal heptapeptide repeat domain (CTD) of the largest RNA polymerase II subunit (POLR2A), and subsequently binds nascent RNA upstream of early polyadenylation sites to prevent premature mRNA transcript cleavage and polyadenylation. Independently of SCAF4, also acts as a positive regulator of transcript elongation. The polypeptide is SR-related and CTD-associated factor 8 (Homo sapiens (Human)).